The primary structure comprises 257 residues: tRNA (guanine-N(1)-)-methyltransferase (257 aa).

Residues Gly117 and 137-142 each bind S-adenosyl-L-methionine; that span reads LGDFVL.

This sequence belongs to the RNA methyltransferase TrmD family. Homodimer.

It localises to the cytoplasm. The enzyme catalyses guanosine(37) in tRNA + S-adenosyl-L-methionine = N(1)-methylguanosine(37) in tRNA + S-adenosyl-L-homocysteine + H(+). Specifically methylates guanosine-37 in various tRNAs. The protein is tRNA (guanine-N(1)-)-methyltransferase of Bordetella pertussis (strain Tohama I / ATCC BAA-589 / NCTC 13251).